Consider the following 423-residue polypeptide: UDP-N-acetylgalactosamine-undecaprenyl-phosphate N-acetylgalactosaminephosphotransferase (423 aa).

Over methionine 1–arginine 13 the chain is Extracellular. A helical membrane pass occupies residues valine 14–alanine 34. Topologically, residues leucine 35–aspartate 47 are cytoplasmic. A helical membrane pass occupies residues alanine 48–leucine 68. Over tyrosine 69 to proline 79 the chain is Extracellular. The helical transmembrane segment at valine 80–phenylalanine 100 threads the bilayer. Topologically, residues leucine 101–arginine 107 are cytoplasmic. The helical transmembrane segment at glutamine 108–glycine 128 threads the bilayer. Over arginine 129–aspartate 239 the chain is Extracellular. A helical membrane pass occupies residues isoleucine 240–leucine 260. The Cytoplasmic portion of the chain corresponds to isoleucine 261–arginine 423.

It belongs to the bacterial sugar transferase family.

The protein localises to the membrane. It catalyses the reaction di-trans,octa-cis-undecaprenyl phosphate + UDP-N-acetyl-alpha-D-galactosamine = N-acetyl-alpha-D-galactosaminyl-di-trans,octa-cis-undecaprenyl diphosphate + UMP. Its pathway is bacterial outer membrane biogenesis; LPS O-antigen biosynthesis. Functionally, transfers N-acetyl-galactosamine (GalNAc) to undecaprenyl phosphate, a step in the assembly of the repeating-unit of the O-antigen. Shows no activity with UDP-N-acetyl-alpha-D-glucosamine. This chain is UDP-N-acetylgalactosamine-undecaprenyl-phosphate N-acetylgalactosaminephosphotransferase (wecA), found in Aeromonas hydrophila.